The following is a 136-amino-acid chain: Histone H3 (136 aa).

Residues 1-43 form a disordered region; that stretch reads MARTKQTARKSTGGKAPRKQLASKAARKSAPSTGGVKKPHRYK. An N6,N6,N6-trimethyllysine; alternate mark is found at lysine 5 and lysine 10. N6,N6-dimethyllysine; alternate is present on lysine 5. Lysine 5 bears the N6-methyllysine; alternate mark. Lysine 10 bears the N6-acetyllysine; alternate mark. Serine 11 carries the phosphoserine modification. Lysine 15 is subject to N6,N6-dimethyllysine; alternate. Residues lysine 15, lysine 19, lysine 24, lysine 28, and lysine 37 each carry the N6-methyllysine; alternate modification. Residues lysine 15, lysine 19, lysine 24, lysine 28, and lysine 37 each carry the N6-acetyllysine; alternate modification. 2 positions are modified to N6,N6,N6-trimethyllysine; alternate: lysine 28 and lysine 37. Lysine 28 and lysine 37 each carry N6,N6-dimethyllysine; alternate. Lysine 57 and lysine 65 each carry N6-acetyllysine. Lysine 80 bears the N6,N6,N6-trimethyllysine; alternate mark. Lysine 80 is modified (N6,N6-dimethyllysine; alternate). Lysine 80 carries the post-translational modification N6-methyllysine; alternate.

The protein belongs to the histone H3 family. The nucleosome is a histone octamer containing two molecules each of H2A, H2B, H3 and H4 assembled in one H3-H4 heterotetramer and two H2A-H2B heterodimers. The octamer wraps approximately 147 bp of DNA. Post-translationally, phosphorylated to form H3S10ph. H3S10ph promotes subsequent H3K14ac formation and is required for transcriptional activation through TBP recruitment to the promoters. In terms of processing, mono-, di- and trimethylated by the COMPASS complex to form H3K4me1/2/3. H3K4me activates gene expression by regulating transcription elongation and plays a role in telomere length maintenance. H3K4me enrichment correlates with transcription levels, and occurs in a 5' to 3' gradient with H3K4me3 enrichment at the 5'-end of genes, shifting to H3K4me2 and then H3K4me1. Trimethylated by methyltransferase dim-5 to form H3K9me3. H3K9me3, but not H3K9me2, marks chromatin regions for cytosine methylation. Methylated by set-2 to form H3K36me. H3K36me represses gene expression. Methylated by dot-1 to form H3K79me. H3K79me is required for association of SIR proteins with telomeric regions and for telomeric silencing. The COMPASS-mediated formation of H3K4me2/3 and the dot-1-mediated formation of H3K79me require H2BK123ub1. Acetylation of histone H3 leads to transcriptional activation. H3K14ac formation by gcn-5 is promoted by H3S10ph. H3K14ac can also be formed by esa-1. H3K56ac formation occurs predominantly in newly synthesized H3 molecules during G1, S and G2/M of the cell cycle and may be involved in DNA repair.

Its subcellular location is the nucleus. It is found in the chromosome. Core component of nucleosome. Nucleosomes wrap and compact DNA into chromatin, limiting DNA accessibility to the cellular machineries which require DNA as a template. Histones thereby play a central role in transcription regulation, DNA repair, DNA replication and chromosomal stability. DNA accessibility is regulated via a complex set of post-translational modifications of histones, also called histone code, and nucleosome remodeling. The polypeptide is Histone H3 (hh3) (Neurospora crassa (strain ATCC 24698 / 74-OR23-1A / CBS 708.71 / DSM 1257 / FGSC 987)).